The primary structure comprises 1483 residues: Dynein axonemal assembly factor 1 homolog (1483 aa).

LRR repeat units lie at residues 34–56 (RLNDVLYLHYQGFQCIESLEEYT), 57–78 (ELKCLWLECNAISEIQGLEKLS), 79–100 (KLKCLFLQNNLITKIENLDPCR), 101–122 (ELDTLNLSSNHIRKIQNIGTNV), 125–146 (VLNTLTISSNYLKDSESLSDLI), and 150–171 (TLSVLDLSNNRIDDILIVKIFE). An LRRCT domain is found at 185 to 223 (PVVSRLPQYRKTLILACKELTYLDSRPVFPRDRACAEAW). Disordered stretches follow at residues 249–282 (SINCTIRMRNSHRPPDQQDPLLRSSDSEDDTCAE), 300–327 (EEVSGEQPISEDGTNSSSSLEDNDGTSS), 945–986 (DSGD…HGTK), and 1167–1213 (SENE…SIDD). The span at 311–327 (DGTNSSSSLEDNDGTSS) shows a compositional bias: polar residues. Residues 1183 to 1196 (TNDKESSDIMEKNG) show a composition bias toward basic and acidic residues.

The protein belongs to the DNAAF1 family.

The protein resides in the cell projection. It localises to the cilium. Its function is as follows. Cilium-specific protein required for cilia structures. The chain is Dynein axonemal assembly factor 1 homolog (dtr) from Drosophila melanogaster (Fruit fly).